Here is a 229-residue protein sequence, read N- to C-terminus: Ribonuclease S-6 (229 aa).

Residues 1-27 form the signal peptide; that stretch reads MGITGMIYMVPMVFSLIVLISCSSTMG. RNA is bound at residue glutamine 36. Cysteine 42 and cysteine 49 are oxidised to a cystine. Residue histidine 60 coordinates RNA. The active-site Proton donor is histidine 60. A disulfide bridge links cysteine 75 with cysteine 119. 2 N-linked (GlcNAc) asparagine glycosylation sites follow: asparagine 77 and asparagine 87. Residues 98-99, phenylalanine 108, 111-112, and 115-116 each bind RNA; these read NV, RQ, and KH. Residue glutamine 112 is part of the active site. Residue histidine 116 is the Proton acceptor of the active site. Asparagine 145 carries an N-linked (GlcNAc...) (high mannose) asparagine glycan. Intrachain disulfides connect cysteine 184-cysteine 222 and cysteine 199-cysteine 210. N-linked (GlcNAc) asparagine; alternate glycosylation is present at asparagine 188. 2 N-linked (GlcNAc...) asparagine; alternate glycosylation sites follow: asparagine 188 and asparagine 203.

This sequence belongs to the RNase T2 family. In terms of processing, the N-glycans attached at Asn-188 and Asn-203 consist of either monosaccharide (GlcNAc) or disaccharide (GlcNAc-GlcNAc) that could not be distinguished.

It catalyses the reaction a ribonucleotidyl-ribonucleotide-RNA + H2O = a 3'-end 3'-phospho-ribonucleotide-RNA + a 5'-end dephospho-ribonucleoside-RNA + H(+). In terms of biological role, self-incompatibility (SI) is the inherited ability of a flowering plant to prevent self-fertilization by discriminating between self and non-self pollen during pollination. In many species, self-incompatibility is controlled by the single, multiallelic locus S. The polypeptide is Ribonuclease S-6 (Pyrus pyrifolia (Chinese pear)).